The primary structure comprises 832 residues: Prickle-like protein 1-B (832 aa).

One can recognise a PET domain in the interval 14-122 (FGCQRSSTSD…NIKMLSRAVM (109 aa)). LIM zinc-binding domains follow at residues 124-188 (AMCE…ELLK), 189-249 (PRCS…HYAE), and 250-313 (YCES…EDVH). 4 disordered regions span residues 312 to 346 (VHAS…ADQC), 428 to 455 (QQPS…QRNN), 602 to 701 (ICQE…KERN), and 766 to 832 (CSSS…CIIS). Composition is skewed to basic and acidic residues over residues 432–453 (EDNR…DLQR) and 603–614 (CQEKPPPEEKPM). Composition is skewed to basic residues over residues 669–680 (RPHHHRRRKSRK) and 816–832 (TKSK…CIIS). Cysteine 829 is subject to Cysteine methyl ester. Residue cysteine 829 is the site of S-farnesyl cysteine attachment. Residues 830-832 (IIS) constitute a propeptide, removed in mature form.

This sequence belongs to the prickle / espinas / testin family. As to quaternary structure, interacts with dvl2/dsh and mapk8/jnk1. Expressed in the dorsal marginal zone of early gastrulae (stage 10). As gastrulation proceeds, expression expands to include the lateral and ventral marginal zones, excluding the few rows of cells above the blastopore lip. Expression moves dorsally with gastrulation cell movements, and by the end of gastrulation expression is seen in dorsal mesoderm and posterior but not anterior neural ectoderm. Expression becomes down-regulated in mesoderm but remains strong in posterior ectoderm through the neurula stages. During tailbud stages, expressed in the pronephric duct, tailbud, tailtip and forming somites. In the most posterior regions, expressed in notochord and in the floorplate of the neural tube with weak expression in the roofplate. At stage 30, expressed in a complex pattern in the head including strong expression in the lens and otic vesicle.

It localises to the cell membrane. Functionally, acts in a planar cell polarity (PCP) complex; polarization along the apical/basal axis of epithelial cells. Regulates the polarized assembly of fibronectrin on the surface of the mesoderm during gastrulation. Essential for gastrulation cell movements, cooperating with dvl2/dsh to activate jnk. Acts together with tes to control axial elongation. In Xenopus laevis (African clawed frog), this protein is Prickle-like protein 1-B (prickle1-b).